The primary structure comprises 100 residues: Small ribosomal subunit protein uS14 (100 aa).

It belongs to the universal ribosomal protein uS14 family. Part of the 30S ribosomal subunit. Contacts proteins S3 and S10.

Binds 16S rRNA, required for the assembly of 30S particles and may also be responsible for determining the conformation of the 16S rRNA at the A site. This Synechococcus sp. (strain CC9311) protein is Small ribosomal subunit protein uS14.